The primary structure comprises 483 residues: Putative inorganic phosphate cotransporter (483 aa).

Helical transmembrane passes span 64–84 (YILS…GILA), 90–110 (LRFL…VPVA), 187–207 (IFYV…IFVY), 292–312 (LPYL…DWMI), 349–369 (ALTL…YSGF), 383–403 (FLMS…PIAA), and 420–440 (IVFF…NIFG). The tract at residues 447 to 483 (WDNPSEDEQKPALESSSTTNPPRLSNGSSAPRAISSS) is disordered. Polar residues predominate over residues 460–483 (ESSSTTNPPRLSNGSSAPRAISSS).

The protein belongs to the major facilitator superfamily. Sodium/anion cotransporter family.

The protein resides in the membrane. May be an inorganic phosphate cotransporter. The sequence is that of Putative inorganic phosphate cotransporter (Picot) from Drosophila ananassae (Fruit fly).